The sequence spans 358 residues: MRPLVATVDLSAIRHNYALAKRCAPQRQAFAVVKANAYGHGAREVVTALHDDADGFAVACLEEAAEVRALHASARILLLEGCFEASEYALAGQLRLDLVIQGAEQGEAFLAAGLDIPLNVWLKLDSGMHRLGFDPAALRAWHARLRSHPGVRELNLISHFACADERNHPLTEQQLESFLGLLDLDFDQRSLANSAAVLTIPAAHMDWLRPGIMLYGSTPLADLSAAELGLKPAMSLGAQLISLREVAVGESVGYGATWIAERPARIGTVSCGYADGYPRTAPAGTPVLVGGRRAILAGRVSMDMLAVDLSDLPEARVGDPVELWGAGLSVDEVARACGTLGYELLSKVTARVPRRYSH.

Lysine 34 acts as the Proton acceptor; specific for D-alanine in catalysis. Lysine 34 is modified (N6-(pyridoxal phosphate)lysine). Substrate is bound at residue arginine 130. Tyrosine 254 functions as the Proton acceptor; specific for L-alanine in the catalytic mechanism. Residue methionine 302 coordinates substrate.

The protein belongs to the alanine racemase family. Pyridoxal 5'-phosphate serves as cofactor.

It catalyses the reaction L-alanine = D-alanine. The protein operates within amino-acid biosynthesis; D-alanine biosynthesis; D-alanine from L-alanine: step 1/1. Its pathway is cell wall biogenesis; peptidoglycan biosynthesis. Its function is as follows. Catalyzes the interconversion of L-alanine and D-alanine. Provides the D-alanine required for cell wall biosynthesis. The protein is Alanine racemase, biosynthetic (alr) of Pseudomonas aeruginosa (strain ATCC 15692 / DSM 22644 / CIP 104116 / JCM 14847 / LMG 12228 / 1C / PRS 101 / PAO1).